The sequence spans 1885 residues: Chitin synthase 5 (1885 aa).

Positions 1–789 (MATRGNVPAH…SIALTGSQAA (789 aa)) constitute a Myosin motor domain. 99–106 (GESGSGKT) is an ATP binding site. N-linked (GlcNAc...) asparagine glycans are attached at residues Asn219 and Asn429. The interval 601 to 649 (KPLRMPSVSRKKHDQLRRMASRRADRSPAPQEEEPLPGTEEAKVRRTKP) is disordered. Residues 609-621 (SRKKHDQLRRMAS) are compositionally biased toward basic residues. The segment at 666–690 (LDNITKSLTAPNVNNYFVFCLKPND) is actin-binding. Residue Asn668 is glycosylated (N-linked (GlcNAc...) asparagine). A disordered region spans residues 794-817 (GDIGSPSRPDTPGHNPFSDSKARL). A run of 2 helical transmembrane segments spans residues 894 to 914 (WLAIVYFLTWYLPDFAIKWIG) and 929 to 949 (FAINLLIWLSCGLVVFFIIVF). The 60-residue stretch at 957-1016 (QNVYSAAELSAHDGKGKHSAYVAIRGQVFDLGAFMPNHYPKIIPQSSLKKYAGVDATGLF) folds into the Cytochrome b5 heme-binding domain. Asn1043 and Asn1068 each carry an N-linked (GlcNAc...) asparagine glycan. The chain crosses the membrane as a helical span at residues 1205–1225 (ILLAVSILLCSVIGFKFFAAL). Residues Asn1462 and Asn1568 are each glycosylated (N-linked (GlcNAc...) asparagine). 3 helical membrane passes run 1599–1619 (LLSTVVAPVTVAYIAYLIVLL), 1626–1646 (VPLTAFILLGAIYGLQAIIFI), and 1653–1673 (MIGWMIVYILAMPVFSLGLPL). Asn1759 and Asn1790 each carry an N-linked (GlcNAc...) asparagine glycan. In terms of domain architecture, DEK-C spans 1827–1882 (LPTDDMLLNEIRDILRTADLMTVTKKGIKQELERRFNVNLDMKRAYIGSATEAILS).

This sequence in the N-terminal section; belongs to the TRAFAC class myosin-kinesin ATPase superfamily. Myosin family. The protein in the C-terminal section; belongs to the chitin synthase family. Class V subfamily. In terms of processing, maximal activity requires trypsin activation, suggesting a zymogenic nature.

The protein localises to the cell membrane. The protein resides in the membrane. The catalysed reaction is [(1-&gt;4)-N-acetyl-beta-D-glucosaminyl](n) + UDP-N-acetyl-alpha-D-glucosamine = [(1-&gt;4)-N-acetyl-beta-D-glucosaminyl](n+1) + UDP + H(+). In terms of biological role, polymerizes chitin, a structural polymer of the cell wall and septum, by transferring the sugar moiety of UDP-GlcNAc to the non-reducing end of the growing chitin polymer. CHS5 is required for the sustained growth at 37 degrees Celsius and is of critical importance for virulence. Especially important at infection temperatures for maintaining the cell wall integrity of developing yeast buds, elongating tips of hyphae, and random sites of expansion in sclerotic forms. The sequence is that of Chitin synthase 5 from Exophiala dermatitidis (Black yeast-like fungus).